The chain runs to 760 residues: Probable ATP-dependent RNA helicase DDX27 (760 aa).

Residues 1–50 (MLAELGFIRTIGENDEVPVEPESDSGDEEEEGPIVLGRKQKALQKNRSAD) are disordered. The segment covering 13–32 (ENDEVPVEPESDSGDEEEEG) has biased composition (acidic residues). Phosphoserine occurs at positions 23, 25, and 48. Residues 55–57 (FVF) carry the Required for interaction with the PEBOW complex motif. The segment at 80–149 (KRAATTLDEK…TDYSSEDEEI (70 aa)) is disordered. Positions 98-122 (KAEDKEAKSGKVEEKEGQADSDLKG) are enriched in basic and acidic residues. Positions 126-148 (PGEDEAGSKDEDSETDYSSEDEE) are enriched in acidic residues. Phosphoserine is present on residues serine 133 and serine 144. The Nuclear localization signal motif lies at 157 to 166 (KVKEKKKKKK). The Q motif signature appears at 184–212 (LSFQDMNLSRPLLKAITAMGFKQPTPIQK). Residues 215 to 389 (IPVGLLGKDI…SVSLKNPVRI (175 aa)) form the Helicase ATP-binding domain. 228–235 (AATGTGKT) serves as a coordination point for ATP. Residues 337 to 340 (DEAD) carry the DEAD box motif. The Helicase C-terminal domain occupies 419-569 (IVAALLMRTF…DVILKFRDKI (151 aa)). Disordered stretches follow at residues 605–624 (KGKE…TKEE) and 679–760 (RLAK…KRKK). Basic residues-rich tracts occupy residues 682-691 (KRNRRTKRAR) and 744-760 (RQRR…KRKK).

The protein belongs to the DEAD box helicase family. DDX27/DRS1 subfamily. Associates with PeBoW complex, composed of BOP1, PES1 and WDR12. Interacts directly with BOP1 and PES1.

It localises to the nucleus. It is found in the nucleolus. Its subcellular location is the chromosome. It catalyses the reaction ATP + H2O = ADP + phosphate + H(+). Functionally, probable ATP-dependent RNA helicase. Component of the nucleolar ribosomal RNA (rRNA) processing machinery that regulates 3' end formation of ribosomal 47S rRNA. The chain is Probable ATP-dependent RNA helicase DDX27 (Ddx27) from Mus musculus (Mouse).